The chain runs to 71 residues: ATP synthase subunit c 1 (71 aa).

2 consecutive transmembrane segments (helical) span residues 4–24 and 46–66; these read FIGA…VGHV and LFVG…IALL.

This sequence belongs to the ATPase C chain family. F-type ATPases have 2 components, F(1) - the catalytic core - and F(0) - the membrane proton channel. F(1) has five subunits: alpha(3), beta(3), gamma(1), delta(1), epsilon(1). F(0) has four main subunits: a(1), b(1), b'(1) and c(10-14). The alpha and beta chains form an alternating ring which encloses part of the gamma chain. F(1) is attached to F(0) by a central stalk formed by the gamma and epsilon chains, while a peripheral stalk is formed by the delta, b and b' chains.

The protein localises to the cell inner membrane. Functionally, f(1)F(0) ATP synthase produces ATP from ADP in the presence of a proton or sodium gradient. F-type ATPases consist of two structural domains, F(1) containing the extramembraneous catalytic core and F(0) containing the membrane proton channel, linked together by a central stalk and a peripheral stalk. During catalysis, ATP synthesis in the catalytic domain of F(1) is coupled via a rotary mechanism of the central stalk subunits to proton translocation. Its function is as follows. Key component of the F(0) channel; it plays a direct role in translocation across the membrane. A homomeric c-ring of between 10-14 subunits forms the central stalk rotor element with the F(1) delta and epsilon subunits. The polypeptide is ATP synthase subunit c 1 (Cereibacter sphaeroides (strain ATCC 17029 / ATH 2.4.9) (Rhodobacter sphaeroides)).